The chain runs to 379 residues: Queuine tRNA-ribosyltransferase (379 aa).

D94 serves as the catalytic Proton acceptor. Substrate contacts are provided by residues 94–98, D148, Q191, and G218; that span reads DSGGF. The RNA binding stretch occupies residues 249-255; that stretch reads GVGSPDS. The Nucleophile role is filled by D268. Positions 273-277 are RNA binding; important for wobble base 34 recognition; sequence TRIAR. Zn(2+) contacts are provided by C306, C308, C311, and H337.

It belongs to the queuine tRNA-ribosyltransferase family. Homodimer. Within each dimer, one monomer is responsible for RNA recognition and catalysis, while the other monomer binds to the replacement base PreQ1. The cofactor is Zn(2+).

The catalysed reaction is 7-aminomethyl-7-carbaguanine + guanosine(34) in tRNA = 7-aminomethyl-7-carbaguanosine(34) in tRNA + guanine. It functions in the pathway tRNA modification; tRNA-queuosine biosynthesis. Functionally, catalyzes the base-exchange of a guanine (G) residue with the queuine precursor 7-aminomethyl-7-deazaguanine (PreQ1) at position 34 (anticodon wobble position) in tRNAs with GU(N) anticodons (tRNA-Asp, -Asn, -His and -Tyr). Catalysis occurs through a double-displacement mechanism. The nucleophile active site attacks the C1' of nucleotide 34 to detach the guanine base from the RNA, forming a covalent enzyme-RNA intermediate. The proton acceptor active site deprotonates the incoming PreQ1, allowing a nucleophilic attack on the C1' of the ribose to form the product. After dissociation, two additional enzymatic reactions on the tRNA convert PreQ1 to queuine (Q), resulting in the hypermodified nucleoside queuosine (7-(((4,5-cis-dihydroxy-2-cyclopenten-1-yl)amino)methyl)-7-deazaguanosine). This Bacillus mycoides (strain KBAB4) (Bacillus weihenstephanensis) protein is Queuine tRNA-ribosyltransferase.